A 431-amino-acid polypeptide reads, in one-letter code: Glucose-1-phosphate adenylyltransferase (431 aa).

A beta-D-fructose 1,6-bisphosphate-binding site is contributed by lysine 39. 3 residues coordinate AMP: arginine 40, histidine 46, and arginine 52. Tyrosine 114 lines the alpha-D-glucose 1-phosphate pocket. Residue arginine 130 coordinates AMP. Residues glycine 179, 194-195, and serine 212 contribute to the alpha-D-glucose 1-phosphate site; that span reads EK. Glutamate 370 and arginine 386 together coordinate AMP. Beta-D-fructose 1,6-bisphosphate is bound by residues 419-423 and 429-431; these read REMLR and QER.

Belongs to the bacterial/plant glucose-1-phosphate adenylyltransferase family. Homotetramer.

The catalysed reaction is alpha-D-glucose 1-phosphate + ATP + H(+) = ADP-alpha-D-glucose + diphosphate. The protein operates within glycan biosynthesis; glycogen biosynthesis. With respect to regulation, allosterically activated by fructose-1,6-bisphosphate (F16BP) and inhibited by AMP. Involved in the biosynthesis of ADP-glucose, a building block required for the elongation reactions to produce glycogen. Catalyzes the reaction between ATP and alpha-D-glucose 1-phosphate (G1P) to produce pyrophosphate and ADP-Glc. The polypeptide is Glucose-1-phosphate adenylyltransferase (Salmonella paratyphi C (strain RKS4594)).